The sequence spans 138 residues: Urease subunit beta (138 aa).

Positions 115–138 (RMRAAGFGDTGEAAPDDGDTESDQ) are disordered. Residues 128–138 (APDDGDTESDQ) show a composition bias toward acidic residues.

This sequence belongs to the urease beta subunit family. In terms of assembly, heterotrimer of UreA (gamma), UreB (beta) and UreC (alpha) subunits. Three heterotrimers associate to form the active enzyme.

The protein localises to the cytoplasm. It carries out the reaction urea + 2 H2O + H(+) = hydrogencarbonate + 2 NH4(+). It functions in the pathway nitrogen metabolism; urea degradation; CO(2) and NH(3) from urea (urease route): step 1/1. This is Urease subunit beta from Haloarcula marismortui (strain ATCC 43049 / DSM 3752 / JCM 8966 / VKM B-1809) (Halobacterium marismortui).